A 75-amino-acid polypeptide reads, in one-letter code: UPF0729 protein C18orf32 homolog (75 aa).

The segment at 1 to 37 (MVCIPCIVIPVLLWVYKRFLEPVLYPIISPIISRFWR) is necessary for its localzation to the endoplasmic reticulum and lipid droplets. The segment covering 43 to 65 (DTPQQKTSTAECNGAANGSTANG) has biased composition (polar residues). The interval 43-75 (DTPQQKTSTAECNGAANGSTANGPKTVADKKAD) is disordered.

It belongs to the UPF0729 family.

It is found in the endoplasmic reticulum. The protein resides in the lipid droplet. This chain is UPF0729 protein C18orf32 homolog, found in Danio rerio (Zebrafish).